The sequence spans 330 residues: Protoheme IX farnesyltransferase (330 aa).

The next 9 helical transmembrane spans lie at 33–53 (VMTL…VDAD), 54–74 (PFLA…AGAL), 101–121 (VSNA…LMAL), 126–146 (LAAG…TMIL), 154–174 (IVIG…AATG), 180–200 (AVIL…ALAL), 227–247 (ILLY…TGLG), 250–270 (VYGA…WRIF), and 308–328 (VLFA…IPGV).

This sequence belongs to the UbiA prenyltransferase family. Protoheme IX farnesyltransferase subfamily. As to quaternary structure, interacts with CtaA.

It is found in the cell inner membrane. It carries out the reaction heme b + (2E,6E)-farnesyl diphosphate + H2O = Fe(II)-heme o + diphosphate. Its pathway is porphyrin-containing compound metabolism; heme O biosynthesis; heme O from protoheme: step 1/1. In terms of biological role, converts heme B (protoheme IX) to heme O by substitution of the vinyl group on carbon 2 of heme B porphyrin ring with a hydroxyethyl farnesyl side group. The chain is Protoheme IX farnesyltransferase from Maricaulis maris (strain MCS10) (Caulobacter maris).